Here is a 227-residue protein sequence, read N- to C-terminus: ATP synthase F(0) complex subunit a (227 aa).

Transmembrane regions (helical) follow at residues 12–32 (PCLL…LLLP), 69–89 (WALL…LGLL), 98–118 (QLSM…LTGL), 139–159 (IPAL…ALGV), 170–190 (LLIQ…PSIS), and 196–216 (ILFL…YVFV).

Belongs to the ATPase A chain family. As to quaternary structure, component of the ATP synthase complex composed at least of ATP5F1A/subunit alpha, ATP5F1B/subunit beta, ATP5MC1/subunit c (homooctomer), MT-ATP6/subunit a, MT-ATP8/subunit 8, ATP5ME/subunit e, ATP5MF/subunit f, ATP5MG/subunit g, ATP5MK/subunit k, ATP5MJ/subunit j, ATP5F1C/subunit gamma, ATP5F1D/subunit delta, ATP5F1E/subunit epsilon, ATP5PF/subunit F6, ATP5PB/subunit b, ATP5PD/subunit d, ATP5PO/subunit OSCP. ATP synthase complex consists of a soluble F(1) head domain (subunits alpha(3) and beta(3)) - the catalytic core - and a membrane F(0) domain - the membrane proton channel (subunits c, a, 8, e, f, g, k and j). These two domains are linked by a central stalk (subunits gamma, delta, and epsilon) rotating inside the F1 region and a stationary peripheral stalk (subunits F6, b, d, and OSCP). Interacts with DNAJC30; interaction is direct.

The protein resides in the mitochondrion inner membrane. It carries out the reaction H(+)(in) = H(+)(out). Its function is as follows. Subunit a, of the mitochondrial membrane ATP synthase complex (F(1)F(0) ATP synthase or Complex V) that produces ATP from ADP in the presence of a proton gradient across the membrane which is generated by electron transport complexes of the respiratory chain. ATP synthase complex consist of a soluble F(1) head domain - the catalytic core - and a membrane F(1) domain - the membrane proton channel. These two domains are linked by a central stalk rotating inside the F(1) region and a stationary peripheral stalk. During catalysis, ATP synthesis in the catalytic domain of F(1) is coupled via a rotary mechanism of the central stalk subunits to proton translocation. With the subunit c (ATP5MC1), forms the proton-conducting channel in the F(0) domain, that contains two crucial half-channels (inlet and outlet) that facilitate proton movement from the mitochondrial intermembrane space (IMS) into the matrix. Protons are taken up via the inlet half-channel and released through the outlet half-channel, following a Grotthuss mechanism. In Gallus gallus (Chicken), this protein is ATP synthase F(0) complex subunit a.